Here is a 409-residue protein sequence, read N- to C-terminus: Tetracenomycin polyketide synthase ketoacyl synthase beta subunit (409 aa).

The region spanning 4–407 is the Ketosynthase family 3 (KS3) domain; it reads PAPVVVTGLG…GFNSALVVRR (404 aa).

This sequence belongs to the thiolase-like superfamily. Beta-ketoacyl-ACP synthases family. The tetracenomycin polyketide synthase (TCM PKS) is composed of a ketosynthase complex (TcmKL), an acyl carrier protein (TcmM), a cyclase (TcmN) and a probable second cyclase (TcmJ). TcmK and TcmL form a heterodimeric complex.

The catalysed reaction is 10 malonyl-CoA + 8 H(+) = tetracenomycin F2 + 10 CO2 + 10 CoA + 2 H2O. Its pathway is antibiotic biosynthesis; tetracenomycin C biosynthesis. Involved in the biosynthesis of tetracenomycin C (TCM C). Part of a type II polyketide synthase (PKS) that catalyzes the synthesis of tetracenomycin F2 (TCM F2), a precursor of TCM C, from malonyl-CoA. TcmK and TcmL form a heterodimeric alpha-beta complex that catalyzes the condensation reactions between the growing acyl-enzyme chain and the malonyl-CoA extender units. This is Tetracenomycin polyketide synthase ketoacyl synthase beta subunit from Streptomyces glaucescens.